The sequence spans 263 residues: Adaptin ear-binding coat-associated protein 2 (263 aa).

Disordered regions lie at residues Lys166–Gly194 and Ala219–Phe263. Ser181 bears the Phosphoserine mark. Short sequence motifs (WXXF motif) lie at residues Trp240–Phe243 and Trp260–Phe263. The span at Ser246–Phe263 shows a compositional bias: low complexity.

This sequence belongs to the NECAP family. As to quaternary structure, interacts with AP1G1 and AP2A1 components of the adapter protein complexes AP-1 and AP-2. Interacts with the GAE domain proteins GGA1, GGA2 and GGA3.

Its subcellular location is the cytoplasmic vesicle. It localises to the clathrin-coated vesicle membrane. It is found in the cell membrane. Functionally, involved in endocytosis. This Homo sapiens (Human) protein is Adaptin ear-binding coat-associated protein 2 (NECAP2).